We begin with the raw amino-acid sequence, 400 residues long: Keratin, type I cytoskeletal 19 (400 aa).

The interval 1 to 79 (MTSYSYRQSS…TASDGLLAGN (79 aa)) is head. Arginine 7 carries the omega-N-methylarginine modification. Residues serine 14 and serine 22 each carry the phosphoserine modification. Arginine 24 is subject to Asymmetric dimethylarginine; alternate. Arginine 24 is subject to Omega-N-methylarginine; alternate. An Omega-N-methylarginine modification is found at arginine 32. Phosphoserine is present on residues serine 35 and serine 40. Residues arginine 43 and arginine 51 each carry the omega-N-methylarginine modification. Serine 57 and serine 72 each carry phosphoserine. The segment at 80–115 (EKLTMQNLNDRLASYLDKVRALEAANGELEVKIRDW) is coil 1A. Residues 80-391 (EKLTMQNLND…SLLEGQEDHY (312 aa)) enclose the IF rod domain. The tract at residues 116–133 (YQKQGPGPSRDYSHYYTT) is linker 1. Residues 134–225 (IQDLRDKILG…KNHEEEISTL (92 aa)) form a coil 1B region. The interval 226-248 (RGQVGGQVSVEVDSAPGTDLAKI) is linker 12. Residues 244–390 (DLAKILSDMR…RSLLEGQEDH (147 aa)) form a necessary for interaction with PNN region. The segment at 249–387 (LSDMRSQYEV…ATYRSLLEGQ (139 aa)) is coil 2. Threonine 323 carries the post-translational modification Phosphothreonine. A rod-like helical tail region spans residues 388–400 (EDHYSNLSASKVL). Tyrosine 391 carries the phosphotyrosine modification. At serine 395 the chain carries Phosphoserine.

It belongs to the intermediate filament family. In terms of assembly, heterotetramer of two type I and two type II keratins. Interacts with PNN and the actin-binding domain of DMD.

Its function is as follows. Involved in the organization of myofibers. Together with KRT8, helps to link the contractile apparatus to dystrophin at the costameres of striated muscle. The chain is Keratin, type I cytoskeletal 19 from Pongo abelii (Sumatran orangutan).